Reading from the N-terminus, the 228-residue chain is MCKGLQVAIDGPASAGKSTVAKLVAKKFNYVYCDTGAMYRAVTLAVLNQGIDPKDDKKVAEIARQIKIDFEPGEIEQRVFLDGKEVTHDIRLPKVAANVSAVAAVPAVREEMTKQQRQIAENGGIVMDGRDIGTTVLPQAPVKIFMVASAYERARRRYAENQAKGINTTSLEELQKAIELRDKKDSTRKVSPLTQAPDAIKLDTTNMTIDEVVSEISKIIKKTQDELA.

11 to 19 (GPASAGKST) provides a ligand contact to ATP.

The protein belongs to the cytidylate kinase family. Type 1 subfamily.

It localises to the cytoplasm. It catalyses the reaction CMP + ATP = CDP + ADP. It carries out the reaction dCMP + ATP = dCDP + ADP. The polypeptide is Cytidylate kinase (Limosilactobacillus reuteri (strain DSM 20016) (Lactobacillus reuteri)).